We begin with the raw amino-acid sequence, 295 residues long: uncharacterized protein (295 aa).

An HTH lysR-type domain is found at 1–58 (MESGDLRVFQMVAREGTITKAALQLGYVQSNVTARIQQLEAELGTTLFLRHNRGMTLS). The H-T-H motif DNA-binding region spans 18–37 (ITKAALQLGYVQSNVTARIQ).

Belongs to the LysR transcriptional regulatory family.

This is an uncharacterized protein from Bacillus subtilis (strain 168).